A 61-amino-acid chain; its full sequence is MAKTSMIIKAQRGSKFKVREYNRCPLCGRPRAYYRKFDMCRICLRKLASAGQIPGVIKSSW.

Cysteine 24, cysteine 27, cysteine 40, and cysteine 43 together coordinate Zn(2+).

Belongs to the universal ribosomal protein uS14 family. Zinc-binding uS14 subfamily. Part of the 30S ribosomal subunit. Contacts proteins S3 and S10. Zn(2+) is required as a cofactor.

In terms of biological role, binds 16S rRNA, required for the assembly of 30S particles and may also be responsible for determining the conformation of the 16S rRNA at the A site. The sequence is that of Small ribosomal subunit protein uS14 from Geotalea uraniireducens (strain Rf4) (Geobacter uraniireducens).